Here is a 38-residue protein sequence, read N- to C-terminus: Cytochrome b6-f complex subunit 5 (38 aa).

The helical transmembrane segment at 5–25 (LLLGIVLGLIPVTLAGLFVAA) threads the bilayer.

Belongs to the PetG family. As to quaternary structure, the 4 large subunits of the cytochrome b6-f complex are cytochrome b6, subunit IV (17 kDa polypeptide, PetD), cytochrome f and the Rieske protein, while the 4 small subunits are PetG, PetL, PetM and PetN. The complex functions as a dimer.

Its subcellular location is the cellular thylakoid membrane. In terms of biological role, component of the cytochrome b6-f complex, which mediates electron transfer between photosystem II (PSII) and photosystem I (PSI), cyclic electron flow around PSI, and state transitions. PetG is required for either the stability or assembly of the cytochrome b6-f complex. The protein is Cytochrome b6-f complex subunit 5 of Picosynechococcus sp. (strain ATCC 27264 / PCC 7002 / PR-6) (Agmenellum quadruplicatum).